The primary structure comprises 262 residues: Transcription factor Spi-B (262 aa).

Residues 1-31 are TAD1 (Acidic); that stretch reads MLALEAAQLDGPHFSCLYPDGVFYDLDSCKH. Residues 41 to 61 are TAD2; the sequence is PDSLWDWTVAPPVPATPYEAF. The interval 140–163 is disordered; that stretch reads ALEVSDSESDEALVAGPEGKGSEA. Residues 169–252 constitute a DNA-binding region (ETS); that stretch reads LRLYQFLLGL…VKRKLTYQFD (84 aa).

Belongs to the ETS family. Can form homotypic interactions. Interacts with IRF4/Pip. Interacts with JUN. Interacts with TBP. May also interact with CREBBP and EP300. Interacts with NONO/p54(nrb). As to expression, expressed in plasmacytoid dendritic cells (pDCs) and B-cells, not expressed in T-cells or granulocytes. May also be enriched in stem cell populations of the liver.

The protein resides in the nucleus. Its subcellular location is the cytoplasm. In terms of biological role, sequence specific transcriptional activator which binds to the PU-box, a purine-rich DNA sequence (5'-GAGGAA-3') that can act as a lymphoid-specific enhancer. Promotes development of plasmacytoid dendritic cells (pDCs), also known as type 2 DC precursors (pre-DC2) or natural interferon (IFN)-producing cells. These cells have the capacity to produce large amounts of interferon and block viral replication. May be required for B-cell receptor (BCR) signaling, which is necessary for normal B-cell development and antigenic stimulation. This is Transcription factor Spi-B (SPIB) from Homo sapiens (Human).